A 520-amino-acid chain; its full sequence is Glutamate--cysteine ligase (520 aa).

Belongs to the glutamate--cysteine ligase type 1 family. Type 1 subfamily.

It catalyses the reaction L-cysteine + L-glutamate + ATP = gamma-L-glutamyl-L-cysteine + ADP + phosphate + H(+). It functions in the pathway sulfur metabolism; glutathione biosynthesis; glutathione from L-cysteine and L-glutamate: step 1/2. This Serratia proteamaculans (strain 568) protein is Glutamate--cysteine ligase.